The sequence spans 246 residues: Protein-lysine N-methyltransferase EFM6 (246 aa).

S-adenosyl-L-methionine contacts are provided by residues Trp51, 87-89 (GSG), Asp115, Trp143, and Ala169.

This sequence belongs to the class I-like SAM-binding methyltransferase superfamily. METTL21 family. EFM6 subfamily.

The protein resides in the cytoplasm. S-adenosyl-L-methionine-dependent protein-lysine N-methyltransferase that methylates elongation factor 1-alpha (TEF1 and TEF2) at 'Lys-390'. This chain is Protein-lysine N-methyltransferase EFM6, found in Saccharomyces cerevisiae (strain ATCC 204508 / S288c) (Baker's yeast).